The sequence spans 323 residues: MKHLINIADHSAEEILGLMDEADRFREALEGREVKKLPTLRGRTVFTLFYENSTRTRSSFETAGKWMSADVINLSASTSSVKKGESLKDTGLTLASIGADAIIMRHPSSGAAQQLAGWVAPEGQGPSVINAGDGSHQHPTQALLDAVTMRQRLHLGADRSAAGTGFEGLKVTIVGDCLHSRVVRSNVDLLSTLGAEVTLVAPPTLLPFGVDTWPVRVSHDFDAEVPEADVVMMLRVQAERMNGGFFPSHREYASLYGLSKDRAAAMKKDAIIMHPGPMVRGMEINYAVADYDNTAVLQQVNNGVHVRMATLFTLLTNGENAGI.

Residues R55 and T56 each coordinate carbamoyl phosphate. K83 provides a ligand contact to L-aspartate. Carbamoyl phosphate-binding residues include R105, H138, and Q141. R181 and R235 together coordinate L-aspartate. Residues G276 and P277 each contribute to the carbamoyl phosphate site.

It belongs to the aspartate/ornithine carbamoyltransferase superfamily. ATCase family. Heterododecamer (2C3:3R2) of six catalytic PyrB chains organized as two trimers (C3), and six regulatory PyrI chains organized as three dimers (R2).

It carries out the reaction carbamoyl phosphate + L-aspartate = N-carbamoyl-L-aspartate + phosphate + H(+). It participates in pyrimidine metabolism; UMP biosynthesis via de novo pathway; (S)-dihydroorotate from bicarbonate: step 2/3. Functionally, catalyzes the condensation of carbamoyl phosphate and aspartate to form carbamoyl aspartate and inorganic phosphate, the committed step in the de novo pyrimidine nucleotide biosynthesis pathway. The chain is Aspartate carbamoyltransferase catalytic subunit from Corynebacterium aurimucosum (strain ATCC 700975 / DSM 44827 / CIP 107346 / CN-1) (Corynebacterium nigricans).